We begin with the raw amino-acid sequence, 645 residues long: Dictomallein-like protein (645 aa).

A signal peptide spans 1–13 (MKLSMVMVLLVLA). Positions 19 to 55 (CGGNDDNNSERTHESGDSNGDVTTPDNDASSNDEDDA) are disordered. Residues 177–448 (PALHPELDLT…QRWVRNRARM (272 aa)) enclose the Peptidase M66 domain. His333 contributes to the Zn(2+) binding site. Residue Glu334 is part of the active site. Positions 337 and 343 each coordinate Zn(2+).

The protein belongs to the dictomallein family. Zn(2+) is required as a cofactor.

The protein resides in the secreted. In Hahella chejuensis (strain KCTC 2396), this protein is Dictomallein-like protein (dtmL).